The primary structure comprises 142 residues: Maximins y/Hv type 1 (142 aa).

The first 18 residues, 1-18 (MNFKYIVAVSFLIASGYA), serve as a signal peptide directing secretion. A propeptide spanning residues 19–43 (RSEENDVQSLSQREVLEEESLREIR) is cleaved from the precursor. Phe68 is subject to Phenylalanine amide. Positions 72 to 121 (TAEDHEVMKRLEAVMRDLDSLDHPEEASERETRGFNQEEIANLFTKKEKR) are excised as a propeptide. Ile141 carries the post-translational modification Isoleucine amide.

This sequence belongs to the bombinin family. Expressed by the skin glands.

It is found in the secreted. In terms of biological role, maximin-y shows antimicrobial activity against bacteria and against the fungus C.albicans. It has little hemolytic activity. Functionally, maximin-Hv shows antimicrobial activity against bacteria and against the fungus C.albicans. Shows strong hemolytic activity. In Bombina maxima (Giant fire-bellied toad), this protein is Maximins y/Hv type 1.